A 267-amino-acid polypeptide reads, in one-letter code: Hydroxyethylthiazole kinase (267 aa).

Residue Met-48 coordinates substrate. The ATP site is built by Arg-124 and Ser-170. Gly-197 is a binding site for substrate.

It belongs to the Thz kinase family. Mg(2+) serves as cofactor.

It carries out the reaction 5-(2-hydroxyethyl)-4-methylthiazole + ATP = 4-methyl-5-(2-phosphooxyethyl)-thiazole + ADP + H(+). The protein operates within cofactor biosynthesis; thiamine diphosphate biosynthesis; 4-methyl-5-(2-phosphoethyl)-thiazole from 5-(2-hydroxyethyl)-4-methylthiazole: step 1/1. Functionally, catalyzes the phosphorylation of the hydroxyl group of 4-methyl-5-beta-hydroxyethylthiazole (THZ). The protein is Hydroxyethylthiazole kinase of Leptospira biflexa serovar Patoc (strain Patoc 1 / Ames).